A 1479-amino-acid polypeptide reads, in one-letter code: MHKLIIKYNKQLKMLNLRDGKTYTISEDERADITLKSLGEVIHLEQNNQGTWQANHTSINKVLVRKGDLDDITLQLYTEADYASFAYPSIQDTMTIGPNAYDDMVIQSLMNAIIIKDFQSIQESQYVRIVHDKNTDVYINYELQEQLTNKAYIGDHIYVEGIWLEVQADGLNVLSQNTVASSLIRLTQEMPHAQADDYNTYHRSPRIIHREPTDDIKIERPPQPIQKNNTVIWRSIIPPLVMIALTVVIFLVRPIGIYILMMIGMSTVTIVFGITTYFSEKKKYNKDVEKREKDYKAYLDNKSKEINKAIKAQRFSLNYHYPTVAEIKDIVETKAPRIYEKTSHHHDFLHYKLGIANVEKSFKLDYQEEEFNQRRDELFDDAKELYEFYTDVEQAPLINDLNHGPIAYIGARHLILEELEKMLIQLSTFHSYHDLEFLFVTREDEVETLKWARWLPHMTLRGQNIRGFVYNQRTRDQILTSIYSMIKERIQAVRERSRSNEQIIFTPQLVFVITDMSLIIDHVILEYVNQDLSEYGISLIFVEDVIESLPEHVDTIIDIKSRTEGELITKEKELVQLKFTPENIDNVDKEYIARRLANLIHVEHLKNAIPDSITFLEMYNVKEVDQLDVVNRWRQNETYKTMAVPLGVRGKDDILSLNLHEKAHGPHGLVAGTTGSGKSEIIQSYILSLAINFHPHEVAFLLIDYKGGGMANLFKDLVHLVGTITNLDGDEAMRALTSIKAELRKRQRLFGEHDVNHINQYHKLFKEGIATEPMPHLFIISDEFAELKSEQPDFMKELVSTARIGRSLGIHLILATQKPSGVVDDQIWSNSKFKLALKVQDRQDSNEILKTPDAADITLPGRAYLQVGNNEIYELFQSAWSGATYDIEGDKLEVEDKTIYMINDYGQLQAINKDLSGLEDEETKENQTELEAVIDHIESITTRLEIEEVKRPWLPPLPENVYQEDLVETDFRKLWSDDAKEVELTLGLKDVPEEQYQGPMVLQLKKAGHIALIGSPGYGRTTFLHNIIFDVARHHRPDQAHMYLFDFGTNGLMPVTDIPHVADYFTVDQEDKIAKAIRIFNDEIDRRKKILSQYRVTSISEYRKLTGETIPHVFILIDNFDAVKDSPFQEVFENMMIKMTREGLALDMQVTLTASRANAMKTPMYINMKTRIAMFLYDKSEVSNVVGQQKFAVKDVVGRALLSSDDNVSFHIGQPFKHDETKSYNDQINDEVSAMTEFYKGETPNDIPMMPDEIKYEDYRESLNLPDIVANGALPIGLDYEGVTLQKIKLTEPAMISSENPREIAHIAEIMMKEIDILNEKYAICIADSSGEFKAYRHQVANFAEEREDIKAIHQLMIEDLKQREMDGPFEKDSLYIINDFKTFIDCTYIPEDDVKKLITKGPELGLNILFVGIHKELIDAYDKQIDVARKMINQFSIGIRISDQQFFKFRFIQREPVIKENEAYMVANQAYQKIRWFK.

Residues 1-189 (MHKLIIKYNK…ASSLIRLTQE (189 aa)) are required for substrate secretion, protein missing this segment is unstable. At 1–229 (MHKLIIKYNK…RPPQPIQKNN (229 aa)) the chain is on the cytoplasmic side. The helical transmembrane segment at 230-252 (TVIWRSIIPPLVMIALTVVIFLV) threads the bilayer. Over 253–256 (RPIG) the chain is Extracellular. Residues 257–279 (IYILMMIGMSTVTIVFGITTYFS) form a helical membrane-spanning segment. At 280 to 1479 (EKKKYNKDVE…QAYQKIRWFK (1200 aa)) the chain is on the cytoplasmic side. FtsK domains are found at residues 652-846 (DDIL…QDSN) and 997-1183 (QGPM…SEVS). Residues 672 to 679 (GTTGSGKS) and 1014 to 1021 (GSPGYGRT) each bind ATP. A required for substrate secretion, truncated protein is stable region spans residues 1249–1479 (MMPDEIKYED…QAYQKIRWFK (231 aa)).

Belongs to the EssC family. Homooligomer. Interacts with EsaE.

Its subcellular location is the cell membrane. Functionally, component of the type VII secretion system (Ess). Required for the secretion of substrates including EsxA and EsxB. However, unable to support secretion of the substrate protein EsxC. The chain is Type VII secretion system protein EssC from Staphylococcus aureus (strain NCTC 8325 / PS 47).